The chain runs to 96 residues: Large ribosomal subunit protein uL23 (96 aa).

This sequence belongs to the universal ribosomal protein uL23 family. Part of the 50S ribosomal subunit. Contacts protein L29, and trigger factor when it is bound to the ribosome.

In terms of biological role, one of the early assembly proteins it binds 23S rRNA. One of the proteins that surrounds the polypeptide exit tunnel on the outside of the ribosome. Forms the main docking site for trigger factor binding to the ribosome. This chain is Large ribosomal subunit protein uL23, found in Aster yellows witches'-broom phytoplasma (strain AYWB).